The chain runs to 357 residues: AA9 family lytic polysaccharide monooxygenase B (357 aa).

Positions 1–18 (MKFSSVLALAASAKLVAS) are cleaved as a signal peptide. Cu(2+) is bound by residues His-19 and His-101. The tract at residues 19-234 (HATVFAVWIN…IPGPAVWDGA (216 aa)) is catalytic. Cys-61 and Cys-182 are disulfide-bonded. Residues His-168 and Gln-177 each contribute to the O2 site. Tyr-179 contributes to the Cu(2+) binding site. The tract at residues 235 to 318 (SSGSGSSGSG…SAAPTGGTGT (84 aa)) is ser/Thr-rich linker. Positions 292-317 (SVRPTTSAAPTTSAPTSSAAPTGGTG) are disordered. Positions 295 to 313 (PTTSAAPTTSAPTSSAAPT) are enriched in low complexity. The CBM1 domain maps to 319–355 (GSIQIYQQCGGMNYKGATGCASGLTCKQWNPYYHQCV).

It belongs to the polysaccharide monooxygenase AA9 family. Cu(2+) serves as cofactor.

It localises to the secreted. It catalyses the reaction [(1-&gt;4)-beta-D-glucosyl]n+m + reduced acceptor + O2 = 4-dehydro-beta-D-glucosyl-[(1-&gt;4)-beta-D-glucosyl]n-1 + [(1-&gt;4)-beta-D-glucosyl]m + acceptor + H2O.. Its function is as follows. Lytic polysaccharide monooxygenase (LPMO) that depolymerizes crystalline and amorphous polysaccharides via the oxidation of scissile alpha- or beta-(1-4)-glycosidic bonds, yielding C4 oxidation products. Catalysis by LPMOs requires the reduction of the active-site copper from Cu(II) to Cu(I) by a reducing agent and H(2)O(2) or O(2) as a cosubstrate. Active on carboxymethylcellulose (CMC), hydroxyethylcellulose (HEC) and beta-glucan. Also active on soluble cellohexaose, a property that is restricted to only a few characterized LPMOs. This Emericella nidulans (strain FGSC A4 / ATCC 38163 / CBS 112.46 / NRRL 194 / M139) (Aspergillus nidulans) protein is AA9 family lytic polysaccharide monooxygenase B.